The primary structure comprises 124 residues: Large ribosomal subunit protein bL12 (124 aa).

It belongs to the bacterial ribosomal protein bL12 family. In terms of assembly, homodimer. Part of the ribosomal stalk of the 50S ribosomal subunit. Forms a multimeric L10(L12)X complex, where L10 forms an elongated spine to which 2 to 4 L12 dimers bind in a sequential fashion. Binds GTP-bound translation factors.

In terms of biological role, forms part of the ribosomal stalk which helps the ribosome interact with GTP-bound translation factors. Is thus essential for accurate translation. This chain is Large ribosomal subunit protein bL12, found in Christiangramia forsetii (strain DSM 17595 / CGMCC 1.15422 / KT0803) (Gramella forsetii).